The primary structure comprises 173 residues: Crossover junction endodeoxyribonuclease RuvC (173 aa).

Catalysis depends on residues D8, E67, and D139. D8, E67, and D139 together coordinate Mg(2+).

This sequence belongs to the RuvC family. Homodimer which binds Holliday junction (HJ) DNA. The HJ becomes 2-fold symmetrical on binding to RuvC with unstacked arms; it has a different conformation from HJ DNA in complex with RuvA. In the full resolvosome a probable DNA-RuvA(4)-RuvB(12)-RuvC(2) complex forms which resolves the HJ. Mg(2+) is required as a cofactor.

It is found in the cytoplasm. The enzyme catalyses Endonucleolytic cleavage at a junction such as a reciprocal single-stranded crossover between two homologous DNA duplexes (Holliday junction).. Its function is as follows. The RuvA-RuvB-RuvC complex processes Holliday junction (HJ) DNA during genetic recombination and DNA repair. Endonuclease that resolves HJ intermediates. Cleaves cruciform DNA by making single-stranded nicks across the HJ at symmetrical positions within the homologous arms, yielding a 5'-phosphate and a 3'-hydroxyl group; requires a central core of homology in the junction. The consensus cleavage sequence is 5'-(A/T)TT(C/G)-3'. Cleavage occurs on the 3'-side of the TT dinucleotide at the point of strand exchange. HJ branch migration catalyzed by RuvA-RuvB allows RuvC to scan DNA until it finds its consensus sequence, where it cleaves and resolves the cruciform DNA. The sequence is that of Crossover junction endodeoxyribonuclease RuvC from Shewanella amazonensis (strain ATCC BAA-1098 / SB2B).